The sequence spans 384 residues: FAD-dependent urate hydroxylase (384 aa).

FAD is bound by residues Gly-11, 30–31 (EA), Ser-43, and Val-125. Residues Asn-178, Arg-204, and 216–218 (YFF) each bind substrate. FAD is bound by residues Asp-285 and 295–299 (GQGGC).

Belongs to the FAD-dependent urate hydroxylase family. The cofactor is FAD.

The enzyme catalyses urate + NADH + O2 + H(+) = 5-hydroxyisourate + NAD(+) + H2O. It functions in the pathway purine metabolism; urate degradation. Catalyzes the hydroxylation of uric acid to 5-hydroxyisourate. In Klebsiella oxytoca, this protein is FAD-dependent urate hydroxylase (hpxO).